Consider the following 223-residue polypeptide: tRNA (guanine-N(7)-)-methyltransferase (223 aa).

S-adenosyl-L-methionine-binding residues include Glu-45, Glu-70, and Asp-125. The active site involves Asp-125. Substrate-binding positions include Lys-129, Asp-161, and 201–204 (TEYE).

The protein belongs to the class I-like SAM-binding methyltransferase superfamily. TrmB family.

The enzyme catalyses guanosine(46) in tRNA + S-adenosyl-L-methionine = N(7)-methylguanosine(46) in tRNA + S-adenosyl-L-homocysteine. The protein operates within tRNA modification; N(7)-methylguanine-tRNA biosynthesis. Its function is as follows. Catalyzes the formation of N(7)-methylguanine at position 46 (m7G46) in tRNA. In Mesoplasma florum (strain ATCC 33453 / NBRC 100688 / NCTC 11704 / L1) (Acholeplasma florum), this protein is tRNA (guanine-N(7)-)-methyltransferase.